Reading from the N-terminus, the 348-residue chain is Dihydroorotase (348 aa).

Zn(2+)-binding residues include His14 and His16. Residues 16 to 18 and Asn42 each bind substrate; that span reads HLR. Residues Lys100, His137, and His175 each contribute to the Zn(2+) site. An N6-carboxylysine modification is found at Lys100. His137 is a substrate binding site. A substrate-binding site is contributed by Leu220. Asp248 contributes to the Zn(2+) binding site. Asp248 is an active-site residue. Residues His252 and Ala264 each contribute to the substrate site.

The protein belongs to the metallo-dependent hydrolases superfamily. DHOase family. Class II DHOase subfamily. Homodimer. The cofactor is Zn(2+).

It catalyses the reaction (S)-dihydroorotate + H2O = N-carbamoyl-L-aspartate + H(+). It functions in the pathway pyrimidine metabolism; UMP biosynthesis via de novo pathway; (S)-dihydroorotate from bicarbonate: step 3/3. Functionally, catalyzes the reversible cyclization of carbamoyl aspartate to dihydroorotate. This Pseudomonas aeruginosa (strain ATCC 15692 / DSM 22644 / CIP 104116 / JCM 14847 / LMG 12228 / 1C / PRS 101 / PAO1) protein is Dihydroorotase.